Consider the following 264-residue polypeptide: MKQYLELMRLVRTQGISKVDRTNTGTLSIFGHQMRFNLSHGFPLITTKRCHLRSIIYELLWFLNGDTNINYLRKHHVTIWDEWINEKGDLGPIYGRQWRAWGTADGSYIDQLSDVMLQLKHNPDSRRIIVSAWNVGEIKQMALAPCHVLFQFYVANGVLSCQLYQRSCDMFLGLPFNISSYALLIHMVAQQCDLQLGEFIWTGGDIHLYRNHLKQTDLQLKRNPRPLPQLIIKRRPASLFQYQFDDFYLSGYDPHPAIKAQVAV.

R21 is a binding site for dUMP. H51 contacts (6R)-5,10-methylene-5,6,7,8-tetrahydrofolate. 126 to 127 (RR) provides a ligand contact to dUMP. C146 acts as the Nucleophile in catalysis. Residues 166 to 169 (RSCD), N177, and 207 to 209 (HLY) contribute to the dUMP site. Position 169 (D169) interacts with (6R)-5,10-methylene-5,6,7,8-tetrahydrofolate. A263 lines the (6R)-5,10-methylene-5,6,7,8-tetrahydrofolate pocket.

It belongs to the thymidylate synthase family. Bacterial-type ThyA subfamily. In terms of assembly, homodimer.

It localises to the cytoplasm. The enzyme catalyses dUMP + (6R)-5,10-methylene-5,6,7,8-tetrahydrofolate = 7,8-dihydrofolate + dTMP. It participates in pyrimidine metabolism; dTTP biosynthesis. Functionally, catalyzes the reductive methylation of 2'-deoxyuridine-5'-monophosphate (dUMP) to 2'-deoxythymidine-5'-monophosphate (dTMP) while utilizing 5,10-methylenetetrahydrofolate (mTHF) as the methyl donor and reductant in the reaction, yielding dihydrofolate (DHF) as a by-product. This enzymatic reaction provides an intracellular de novo source of dTMP, an essential precursor for DNA biosynthesis. This is Thymidylate synthase from Baumannia cicadellinicola subsp. Homalodisca coagulata.